We begin with the raw amino-acid sequence, 440 residues long: Adenylyltransferase and sulfurtransferase UBA4 (440 aa).

The residue at position 1 (M1) is an N-acetylmethionine. Residues G77, D98, 105-109 (SNLHR), K122, and 166-167 (DS) each bind ATP. C208 and C211 together coordinate Zn(2+). C225 serves as the catalytic Glycyl thioester intermediate; for adenylyltransferase activity. Zn(2+) contacts are provided by C286 and C289. S326 bears the Phosphoserine mark. One can recognise a Rhodanese domain in the interval 339-438 (FLAKHIFLDV…YIDDIDQTIP (100 aa)). Residue C397 is the Cysteine persulfide intermediate; for sulfurtransferase activity of the active site.

In the N-terminal section; belongs to the HesA/MoeB/ThiF family. UBA4 subfamily. Zn(2+) is required as a cofactor.

It localises to the cytoplasm. Its subcellular location is the cytosol. It functions in the pathway tRNA modification; 5-methoxycarbonylmethyl-2-thiouridine-tRNA biosynthesis. Its function is as follows. Plays a central role in 2-thiolation of mcm(5)S(2)U at tRNA wobble positions of cytosolic tRNA(Lys), tRNA(Glu) and tRNA(Gln). Acts by mediating the C-terminal thiocarboxylation of sulfur carrier URM1. Its N-terminus first activates URM1 as acyl-adenylate (-COAMP), then the persulfide sulfur on the catalytic cysteine is transferred to URM1 to form thiocarboxylation (-COSH) of its C-terminus. The reaction probably involves hydrogen sulfide that is generated from the persulfide intermediate and that acts as a nucleophile towards URM1. Subsequently, a transient disulfide bond is formed. Does not use thiosulfate as sulfur donor; NFS1 probably acting as a sulfur donor for thiocarboxylation reactions. Prior mcm(5) tRNA modification by the elongator complex is required for 2-thiolation. May also be involved in protein urmylation. The protein is Adenylyltransferase and sulfurtransferase UBA4 of Saccharomyces cerevisiae (strain YJM789) (Baker's yeast).